The sequence spans 195 residues: 3-isopropylmalate dehydratase small subunit (195 aa).

The protein belongs to the LeuD family. LeuD type 1 subfamily. In terms of assembly, heterodimer of LeuC and LeuD.

It catalyses the reaction (2R,3S)-3-isopropylmalate = (2S)-2-isopropylmalate. Its pathway is amino-acid biosynthesis; L-leucine biosynthesis; L-leucine from 3-methyl-2-oxobutanoate: step 2/4. Functionally, catalyzes the isomerization between 2-isopropylmalate and 3-isopropylmalate, via the formation of 2-isopropylmaleate. The sequence is that of 3-isopropylmalate dehydratase small subunit from Corynebacterium kroppenstedtii (strain DSM 44385 / JCM 11950 / CIP 105744 / CCUG 35717).